A 425-amino-acid chain; its full sequence is Proline iminopeptidase (425 aa).

The AB hydrolase-1 domain maps to 52–315 (PWLLYLQGGP…EFPALAWAQG (264 aa)). Serine 146 acts as the Nucleophile in catalysis. Aspartate 351 is a catalytic residue. The active-site Proton donor is the histidine 404.

It belongs to the peptidase S33 family. As to quaternary structure, homotetramer.

It is found in the cytoplasm. The enzyme catalyses Release of N-terminal proline from a peptide.. Its function is as follows. Higher activity toward long peptides. Acts on hydroxyproline beta-naphthylamide with almost as high an activity as on proline beta-naphthylamide. The chain is Proline iminopeptidase (pip) from Aeromonas sobria.